Reading from the N-terminus, the 359-residue chain is MKSIGLNLSGREYKILIGSDLLSETATLLREAIPCDRVVVITNIDINRIYGKKLKKHLESKGIESLFLELPEGEIHKTLDMAAHIYPQLINHFAERNTPILALGGGVIGDLSGFVAATYQRGVPLIHLPTSLLSQVDSSIGGKVAVNHGGVKNIVGSFYQPRLVIADTGCLKTLPEKEFACGMAEIIKSAAIGSSELFRMLETNTQAVKDRSPEVMEDIISQTAAIKAGIVCQDETDRGIRNILNFGHTLGHALESTSSFSQSHGAAVAIGMCFAARLSVRLGLCENETALRLEKLIADFGLPTNPKDIDPDKIIEAMHHDKKVSDGRIRFILLKRPGEALIAENILKPDVLSVLEEMK.

NAD(+) is bound by residues 72–77 (EGEIHK), 106–110 (GVIGD), 130–131 (TS), Lys-143, Lys-152, and 170–173 (CLKT). Zn(2+)-binding residues include Glu-185, His-248, and His-264.

This sequence belongs to the sugar phosphate cyclases superfamily. Dehydroquinate synthase family. Requires Co(2+) as cofactor. The cofactor is Zn(2+). It depends on NAD(+) as a cofactor.

The protein localises to the cytoplasm. The catalysed reaction is 7-phospho-2-dehydro-3-deoxy-D-arabino-heptonate = 3-dehydroquinate + phosphate. It participates in metabolic intermediate biosynthesis; chorismate biosynthesis; chorismate from D-erythrose 4-phosphate and phosphoenolpyruvate: step 2/7. Catalyzes the conversion of 3-deoxy-D-arabino-heptulosonate 7-phosphate (DAHP) to dehydroquinate (DHQ). This chain is 3-dehydroquinate synthase, found in Dehalococcoides mccartyi (strain ATCC BAA-2100 / JCM 16839 / KCTC 5957 / BAV1).